The primary structure comprises 676 residues: Pre-mRNA-splicing factor CLF1 (676 aa).

HAT repeat units lie at residues 46–78 (EYQGRKRQEYEGALRRNRLNTGQWMRYAQWELE), 80–112 (REFARARSVFERALEVNSTHVPTWIRYIQCELK), 114–146 (KNINHARNLLDRAVTLLPRVDKLWFTYVATEET), 148–179 (GNIAGCRAVFERWMHWRPPVTAWAAYVNMEKR), 181–212 (REFDRARGILRRYVTVHPGAPAWNKWAKFEME), 215–255 (NRDT…FETR), 257–291 (REYERARALYTYGLEKLPKSKSAKLYADYTAFEKQ), 301–333 (VVLTKRRSKYEDQLKEDPADYDTWFSYITLGQE), 336–369 (LEADQIREIFERAVSNVPPHSKRLWRRYIFLWIK), 379–415 (KEVEKAREIYKTCISIIPHKKFTFAKVWLLWAKFEIR), 417–449 (GNLPEARKILGRGLGMSGGKPALYKGYIALEAK), 451–483 (REFDRCRKLYDKYVEKFAEFAAPWMEYAELEQM), 485–519 (GDEERARAIFELAVSQPEMEMPELVWKRFIEFEAE), 521–553 (ENYDRARAIYRQLLDRTHGHIKVWISFAQFEVT), 576–614 (EAKARARSIFGEAWDALKAANKREERVVLFESWREFEEE), and 620–652 (SKADLDKRKPTPVKKKRKLEDGTFEEYIDYVFP). Residues 616 to 628 (GDDKSKADLDKRK) are compositionally biased toward basic and acidic residues. The tract at residues 616–636 (GDDKSKADLDKRKPTPVKKKR) is disordered.

This sequence belongs to the crooked-neck family. Associated with the spliceosome.

Its subcellular location is the nucleus. In terms of biological role, involved in pre-mRNA splicing and cell cycle progression. Required for the spliceosome assembly and initiation of the DNA replication. This Yarrowia lipolytica (strain CLIB 122 / E 150) (Yeast) protein is Pre-mRNA-splicing factor CLF1 (CLF1).